A 374-amino-acid chain; its full sequence is Probable plastid-lipid-associated protein 3, chloroplastic (374 aa).

A chloroplast-targeting transit peptide spans 1–46 (MAMPPPLFAAASHASLLLPSPTIHSSTGSRRPFRLPLRSSRRPPVA). A disordered region spans residues 19-148 (PSPTIHSSTG…EDNEEERREE (130 aa)). The segment covering 28–54 (GSRRPFRLPLRSSRRPPVAAAAASGVP) has biased composition (low complexity). Composition is skewed to pro residues over residues 64 to 73 (APEPPSQPDP) and 127 to 136 (PAPPPPPPPV).

Belongs to the PAP/fibrillin family.

Its subcellular location is the plastid. The protein resides in the chloroplast. This chain is Probable plastid-lipid-associated protein 3, chloroplastic (PAP3), found in Oryza sativa subsp. japonica (Rice).